The following is a 1748-amino-acid chain: Tight junction protein 1 (1748 aa).

A PDZ 1 domain is found at 23–110 (TVTLHRAPGF…NAKITIRRKK (88 aa)). Over residues 102-112 (AKITIRRKKKV) the composition is skewed to basic residues. The disordered stretch occupies residues 102-189 (AKITIRRKKK…QPAKPTKVTL (88 aa)). The segment covering 123–136 (PVSDNEEDSYDEEI) has biased composition (acidic residues). Residue Ser125 is modified to Phosphoserine. Tyr132 carries the phosphotyrosine modification. Basic and acidic residues predominate over residues 149–175 (RRSEKIWPRDRSASRERSLSPRSDRRS). Ser175, Ser178, and Ser179 each carry phosphoserine. Phosphothreonine is present on Thr185. In terms of domain architecture, PDZ 2 spans 186–264 (KVTLVKSRKN…KLKMVVQRDE (79 aa)). Residues Ser212 and Ser241 each carry the phosphoserine modification. At Thr267 the chain carries Phosphothreonine. Phosphoserine is present on residues Ser275, Ser277, Ser280, Ser284, Ser290, Ser294, Ser297, Ser300, Ser323, Ser329, Ser334, Ser337, and Ser353. Positions 295 to 396 (LASDHSGRSH…PVYAQVGQPD (102 aa)) are disordered. Basic and acidic residues predominate over residues 299–327 (HSGRSHDRPPRRSRSRSPDQRSEPSDHSR). The span at 329–338 (SPQQPSNGSL) shows a compositional bias: polar residues. Thr354 bears the Phosphothreonine mark. The span at 357 to 377 (KHADDHTPKTVEEVTVERNEK) shows a compositional bias: basic and acidic residues. In terms of domain architecture, PDZ 3 spans 421-502 (SMKLVKFRKG…GEEVTILAQK (82 aa)). The 69-residue stretch at 516 to 584 (GDSFYIRTHF…PNKNRAEQLA (69 aa)) folds into the SH3 domain. The region spanning 598–779 (RADFWRFRGL…TTTINLNSMN (182 aa)) is the Guanylate kinase-like domain. Ser617 and Ser622 each carry phosphoserine. The segment at 633-876 (YERVVLREAG…GTPPESAITR (244 aa)) is occludin (OCLN)-binding region. Position 809 is a phosphothreonine (Thr809). Ser810 and Ser821 each carry phosphoserine. Tyr822 carries the post-translational modification Phosphotyrosine. Residues Ser824, Ser828, and Ser837 each carry the phosphoserine modification. 2 disordered regions span residues 825–1081 (APGS…LRYE) and 1095–1587 (DDKQ…PEFD). 5 positions are modified to phosphothreonine: Thr846, Thr848, Thr854, Thr861, and Thr868. Basic and acidic residues predominate over residues 879–892 (EPVREDSSGMHHEN). Positions 893 to 906 (QTYPPYSPQAQPQP) are enriched in low complexity. The residue at position 912 (Ser912) is a Phosphoserine. Composition is skewed to polar residues over residues 934–953 (PETN…NLTN) and 963–979 (PSTS…TPST). Ser968 is subject to Phosphoserine. Residues 998–1014 (DPTKVYRKDPYPEEMMR) show a composition bias toward basic and acidic residues. The segment covering 1061–1072 (YESSSYTDQFSR) has biased composition (polar residues). Phosphoserine is present on residues Ser1071, Ser1111, and Ser1139. A compositionally biased stretch (basic and acidic residues) spans 1110-1125 (HSQDLDSRQHPEESSE). Residues Tyr1140 and Tyr1165 each carry the phosphotyrosine modification. Residues 1151-1371 (RASALRHEEQ…FDRRSFENKP (221 aa)) are actin-binding region (ABR). Composition is skewed to basic and acidic residues over residues 1269–1286 (KMFE…KDVN) and 1336–1347 (PPEDIVRSNHYD). Position 1354 is a phosphotyrosine (Tyr1354). Phosphoserine is present on Ser1366. Low complexity predominate over residues 1389–1400 (SQNQSNFSSYSS). A compositionally biased stretch (basic and acidic residues) spans 1403 to 1420 (KPPEADGVDRSFGEKRYE). Ser1413 carries the phosphoserine modification. 2 stretches are compositionally biased toward polar residues: residues 1459–1470 (NSVSLDFQNSLV) and 1512–1522 (GTEQTQKTVTP). Residues 1538-1547 (PFERKFESPK) are compositionally biased toward basic and acidic residues. Ser1545 and Ser1617 each carry phosphoserine. Residues 1634-1748 (ATARGIFNSN…NCVSVLIDHF (115 aa)) form the ZU5 domain.

It belongs to the MAGUK family. Homodimer. Forms heterodimers TJP3. Forms a heterodimer (via PDZ2 domain) with TJP2/ZO2 (via PDZ2 domain). Interacts with OCLN, CALM, claudins, CGN/cingulin, CXADR, GJA12, GJD3 and UBN1. Interacts (via ZU5 domain) with CDC42BPB and MYZAP. Interacts (via PDZ domain) with GJA1. Interacts (via PDZ domains) with ANKRD2. Interacts with POPDC1 (via the C-terminus cytoplasmic tail). Interacts with HSPA4 and KIRREL1. Interacts with DLL1. Interacts with USP53 (via the C-terminal region). Interacts (via ABR region) with F-actin. Interacts with DNMBP (via C-terminal domain); required for the apical cell-cell junction localization of DNMBP. Interacts with SPEF1. Interacts (via N-terminus) with CTNNA1. Interacts with CLDN18. Interacts with CLDN16 (via TRV motif); this is a prerequisite for anchoring of CLDN16 at the tight junction. Interacts with PKP1; the interaction facilitates TJP1/ZO-1 localization to the plasma membrane. Interacts with PATJ (via PDZ1-6 domains); the interaction is required for attachment and extension of TJP1/ZO1 condensates along the apical cell interface. In terms of processing, phosphorylated at tyrosine redidues in response to epidermal growth factor (EGF). This response is dependent on an intact actin microfilament system. Dephosphorylated by PTPRJ. As to expression, the alpha-containing isoform is found in most epithelial cell junctions. The short isoform is found both in endothelial cells and the highly specialized epithelial junctions of renal glomeruli and Sertoli cells of the seminiferous tubules.

It is found in the cell membrane. Its subcellular location is the cell junction. The protein resides in the tight junction. The protein localises to the gap junction. It localises to the cell projection. It is found in the podosome. In terms of biological role, TJP1, TJP2, and TJP3 are closely related scaffolding proteins that link tight junction (TJ) transmembrane proteins such as claudins, junctional adhesion molecules, and occludin to the actin cytoskeleton. Forms a multistranded TJP1/ZO1 condensate which elongates to form a tight junction belt, the belt is anchored at the apical cell membrane via interaction with PATJ. The tight junction acts to limit movement of substances through the paracellular space and as a boundary between the compositionally distinct apical and basolateral plasma membrane domains of epithelial and endothelial cells. Necessary for lumenogenesis, and particularly efficient epithelial polarization and barrier formation. Plays a role in the regulation of cell migration by targeting CDC42BPB to the leading edge of migrating cells. Plays an important role in podosome formation and associated function, thus regulating cell adhesion and matrix remodeling. With TJP2 and TJP3, participates in the junctional retention and stability of the transcription factor DBPA, but is not involved in its shuttling to the nucleus. May play a role in mediating cell morphology changes during ameloblast differentiation via its role in tight junctions. The protein is Tight junction protein 1 of Homo sapiens (Human).